The primary structure comprises 776 residues: MASTPTLNLSITTPFVRTKIPAKISLPACSWLDRSSSRHVELNHKFCRKLELKVAMCRASLDVQQVRDEVYSNAQPHELVDKKIEERVKYVKNLLSTMDDGRINWSAYDTAWISLIKDFEGRDCPQFPSTLERIAENQLPDGSWGDKDFDCSYDRIINTLACVVALTTWNVHPEINQKGIRYLKENMRKLEETPTVLMTCAFEVVFPALLKKARNLGIHDLPYDMPIVKEICKIGDEKLARIPKKMMEKETTSLMYAAEGVENLDWERLLKLRTPENGSFLSSPAATVVAFMHTKDEDCLRYIKYLLNKFNGGAPNVYPVDLWSRLWATDRLQRLGISRYFESEIKDLLSYVHSYWTDIGVYCTRDSKYADIDDTSMGFRLLRVQGYNMDANVFKYFQKDDKFVCLGGQMNGSATATYNLYRAAQYQFPGEQILEDARKFSQQFLQESIDTNNLLDKWVISPHIPEEMRFGMEMTWYSCLPRIEASYYLQHYGATEDVWLGKTFFRMEEISNENYRELAILDFSKCQAQHQTEWIHMQEWYESNNVKEFGISRKDLLFAYFLAAASIFETERAKERILWARSKIICKMVKSFLEKETGSLEHKIAFLTGSGDKGNGPVNNAMATLHQLLGEFDGYISIQLENAWAAWLTKLEQGEANDGELLATTINICGGRVNQDTLSHNEYKALSDLTNKICHNLAQIQNDKGDEIKDSKRSERDKEVEQDMQALAKLVFEESDLERSIKQTFLAVVRTYYYGAYIAAEKIDVHMFKVLFKPVG.

Residues 1–17 (MASTPTLNLSITTPFVR) constitute a chloroplast transit peptide. Lys238 is a binding site for substrate. 2 residues coordinate Mg(2+): Asp371 and Asp373. A DXDD motif motif is present at residues 371–374 (DIDD). Lys457 contacts substrate.

It belongs to the terpene synthase family. Requires Mg(2+) as cofactor. In terms of tissue distribution, present in both leaves and flowers, with higher levels in leaves.

It is found in the plastid. The protein resides in the chloroplast. It catalyses the reaction peregrinol diphosphate = (2E,6E,10E)-geranylgeranyl diphosphate + H2O. The protein operates within secondary metabolite biosynthesis; terpenoid biosynthesis. In terms of biological role, involved in the biosynthesis of labdane-type diterpenoid including marrubiin and other labdane-related furanoid diterpenoids with potential applications as anti-diabetics, analgesics or vasorelaxants. Terpene synthase that produces peregrinol diphosphate from geranylgeranyl diphosphate (GGPP). This Marrubium vulgare (White horehound) protein is Peregrinol diphosphate synthase CPS1, chloroplastic.